Consider the following 512-residue polypeptide: Probable capsid protein 4 (512 aa).

Belongs to the NCLDV major capsid protein family.

Its subcellular location is the virion. The chain is Probable capsid protein 4 from Acanthamoeba polyphaga mimivirus (APMV).